A 261-amino-acid chain; its full sequence is MEMO1 family protein AF_2310 (261 aa).

Belongs to the MEMO1 family.

The protein is MEMO1 family protein AF_2310 of Archaeoglobus fulgidus (strain ATCC 49558 / DSM 4304 / JCM 9628 / NBRC 100126 / VC-16).